A 98-amino-acid chain; its full sequence is NADH-ubiquinone oxidoreductase chain 4L (98 aa).

3 consecutive transmembrane segments (helical) span residues 1–21 (MSMV…GLLI), 30–50 (LLCL…TILI), and 61–81 (IILL…LVMI).

The protein belongs to the complex I subunit 4L family. As to quaternary structure, core subunit of respiratory chain NADH dehydrogenase (Complex I) which is composed of 45 different subunits.

The protein localises to the mitochondrion inner membrane. The enzyme catalyses a ubiquinone + NADH + 5 H(+)(in) = a ubiquinol + NAD(+) + 4 H(+)(out). Core subunit of the mitochondrial membrane respiratory chain NADH dehydrogenase (Complex I) which catalyzes electron transfer from NADH through the respiratory chain, using ubiquinone as an electron acceptor. Part of the enzyme membrane arm which is embedded in the lipid bilayer and involved in proton translocation. In Neovison vison (American mink), this protein is NADH-ubiquinone oxidoreductase chain 4L (MT-ND4L).